Consider the following 182-residue polypeptide: ATP synthase subunit delta (182 aa).

The protein belongs to the ATPase delta chain family. F-type ATPases have 2 components, F(1) - the catalytic core - and F(0) - the membrane proton channel. F(1) has five subunits: alpha(3), beta(3), gamma(1), delta(1), epsilon(1). CF(0) has four main subunits: a(1), b(1), b'(1) and c(10-14). The alpha and beta chains form an alternating ring which encloses part of the gamma chain. F(1) is attached to F(0) by a central stalk formed by the gamma and epsilon chains, while a peripheral stalk is formed by the delta, b and b' chains.

The protein resides in the cellular thylakoid membrane. Its function is as follows. F(1)F(0) ATP synthase produces ATP from ADP in the presence of a proton or sodium gradient. F-type ATPases consist of two structural domains, F(1) containing the extramembraneous catalytic core and F(0) containing the membrane proton channel, linked together by a central stalk and a peripheral stalk. During catalysis, ATP synthesis in the catalytic domain of F(1) is coupled via a rotary mechanism of the central stalk subunits to proton translocation. Functionally, this protein is part of the stalk that links CF(0) to CF(1). It either transmits conformational changes from CF(0) to CF(1) or is implicated in proton conduction. The sequence is that of ATP synthase subunit delta from Synechococcus sp. (strain CC9605).